A 235-amino-acid polypeptide reads, in one-letter code: Uridylate kinase (235 aa).

ATP is bound at residue 9–12 (KISG). Residue glycine 50 participates in UMP binding. The ATP site is built by glycine 51 and arginine 55. UMP contacts are provided by residues aspartate 70 and 131 to 138 (TGFPYFTT). ATP is bound by residues asparagine 159, tyrosine 165, and aspartate 168.

Belongs to the UMP kinase family. As to quaternary structure, homohexamer; trimer of dimers.

It is found in the cytoplasm. It carries out the reaction UMP + ATP = UDP + ADP. It participates in pyrimidine metabolism; CTP biosynthesis via de novo pathway; UDP from UMP (UMPK route): step 1/1. Unlike other bacteria, is not activated by GTP. UTP is a competitive inhibitor against UMP and a non-competitive inhibitor toward ATP. Catalyzes the reversible phosphorylation of UMP to UDP, with ATP as the most efficient phosphate donor. Is also able to phosphorylate dUMP. In Ureaplasma parvum serovar 3 (strain ATCC 700970), this protein is Uridylate kinase (pyrH).